Reading from the N-terminus, the 134-residue chain is Large ribosomal subunit protein eL32 (134 aa).

It belongs to the eukaryotic ribosomal protein eL32 family.

This is Large ribosomal subunit protein eL32 (RpL32) from Drosophila acanthoptera (Fruit fly).